The primary structure comprises 502 residues: Calnexin homolog (502 aa).

The first 19 residues, 1 to 19, serve as a signal peptide directing secretion; sequence MKFSAYLWWLFLNLALVKG. Over 20–481 the chain is Lumenal; the sequence is TSLLSNVTLA…IDRILEQPLK (462 aa). Asn25 and Asn104 each carry an N-linked (GlcNAc...) asparagine glycan. Cys125 and Cys161 form a disulfide bridge. An alpha-D-glucoside-binding residues include Lys131 and Asp159. Positions 248–381 are p domain (Extended arm); it reads IPDVSVAKPH…PEIENPLYYE (134 aa). 5 tandem repeats follow at residues 250–261, 267–278, 286–297, 305–316, and 320–330. 4 X approximate repeats stretches follow at residues 250–316 and 320–377; these read DVSV…WWKE and GEWI…IENP. A glycan (N-linked (GlcNAc...) asparagine) is linked at Asn296. A disulfide bridge connects residues Cys332 and Cys338. Tandem repeats lie at residues 339–349, 353–363, and 367–377. Residue Glu398 participates in an alpha-D-glucoside binding. N-linked (GlcNAc...) asparagine glycans are attached at residues Asn416 and Asn425. The chain crosses the membrane as a helical span at residues 482-502; the sequence is FVLTAAVVLLTTSVLCCVVFT.

The protein belongs to the calreticulin family. In terms of assembly, interacts with MPD1.

The protein localises to the endoplasmic reticulum membrane. Its function is as follows. Interacts with newly synthesized monoglucosylated glycoproteins in the endoplasmic reticulum. It may act in assisting protein assembly and/or in the retention within the ER of unassembled protein subunits. It seems to play a major role in the quality control apparatus of the ER by the retention of incorrectly folded proteins. The chain is Calnexin homolog (CNE1) from Saccharomyces cerevisiae (strain ATCC 204508 / S288c) (Baker's yeast).